The sequence spans 556 residues: Dihydroxy-acid dehydratase (556 aa).

Asp78 is a Mg(2+) binding site. Cys119 is a binding site for [2Fe-2S] cluster. Residues Asp120 and Lys121 each coordinate Mg(2+). An N6-carboxylysine modification is found at Lys121. Cys191 is a binding site for [2Fe-2S] cluster. Glu442 lines the Mg(2+) pocket. The Proton acceptor role is filled by Ser468.

It belongs to the IlvD/Edd family. Homodimer. The cofactor is [2Fe-2S] cluster. Requires Mg(2+) as cofactor.

It catalyses the reaction (2R)-2,3-dihydroxy-3-methylbutanoate = 3-methyl-2-oxobutanoate + H2O. It carries out the reaction (2R,3R)-2,3-dihydroxy-3-methylpentanoate = (S)-3-methyl-2-oxopentanoate + H2O. The protein operates within amino-acid biosynthesis; L-isoleucine biosynthesis; L-isoleucine from 2-oxobutanoate: step 3/4. Its pathway is amino-acid biosynthesis; L-valine biosynthesis; L-valine from pyruvate: step 3/4. Functions in the biosynthesis of branched-chain amino acids. Catalyzes the dehydration of (2R,3R)-2,3-dihydroxy-3-methylpentanoate (2,3-dihydroxy-3-methylvalerate) into 2-oxo-3-methylpentanoate (2-oxo-3-methylvalerate) and of (2R)-2,3-dihydroxy-3-methylbutanoate (2,3-dihydroxyisovalerate) into 2-oxo-3-methylbutanoate (2-oxoisovalerate), the penultimate precursor to L-isoleucine and L-valine, respectively. This Clostridium kluyveri (strain NBRC 12016) protein is Dihydroxy-acid dehydratase.